The sequence spans 310 residues: Mitochondrial 2-oxodicarboxylate carrier 1 (310 aa).

The next 6 helical transmembrane spans lie at L9–M29, S78–I97, I126–V146, G179–F199, L219–V239, and M281–F301. Solcar repeat units follow at residues L9–F108, M120–L204, and E213–F300.

This sequence belongs to the mitochondrial carrier (TC 2.A.29) family.

The protein localises to the mitochondrion inner membrane. Transports C5-C7 oxodicarboxylates across the inner membranes of mitochondria. Can transport 2-oxoadipate, 2-oxoglutarate, adipate, glutarate, 2-oxopimelate, oxaloacetate, citrate and malate. The main physiological role is probably to supply 2-oxoadipate and 2-oxoglutarate from the mitochondrial matrix to the cytosol where they are used in the biosynthesis of lysine and glutamate, respectively, and in lysine catabolism. In Saccharomyces cerevisiae (strain ATCC 204508 / S288c) (Baker's yeast), this protein is Mitochondrial 2-oxodicarboxylate carrier 1 (ODC1).